Consider the following 700-residue polypeptide: ATP-dependent DNA helicase UvrD2 (700 aa).

The UvrD-like helicase ATP-binding domain occupies 10–301 (AGLDDQQREA…VRLERDYRST (292 aa)). ATP is bound by residues 34–39 (GTGKTR) and arginine 299. One can recognise a UvrD-like helicase C-terminal domain in the interval 302–553 (PQVVSLANRV…LYVGITRARV (252 aa)). A disordered region spans residues 565-595 (PGGRQSRKPSRFLNGIAPQTRADPVPGTSRR). An HRDC domain is found at 626–700 (ADVDEELLLQ…DVLQLVRGRT (75 aa)).

It belongs to the helicase family. UvrD subfamily. Mg(2+) serves as cofactor.

The catalysed reaction is Couples ATP hydrolysis with the unwinding of duplex DNA by translocating in the 3'-5' direction.. It carries out the reaction ATP + H2O = ADP + phosphate + H(+). DNA-dependent ATPase, stimulated equally by ss- and dsDNA. Has both ATPase and helicase activities. This is ATP-dependent DNA helicase UvrD2 (uvrD2) from Mycobacterium bovis (strain ATCC BAA-935 / AF2122/97).